Consider the following 447-residue polypeptide: Elongation factor 1-alpha (447 aa).

The region spanning 5 to 230 (KIHISIVVIG…DQINEPKRPS (226 aa)) is the tr-type G domain. Residues 14–21 (GHVDSGKS) are G1. 14–21 (GHVDSGKS) provides a ligand contact to GTP. Residue Lys55 is modified to N6,N6-dimethyllysine. The segment at 70–74 (GITID) is G2. Lys79 carries the post-translational modification N6,N6,N6-trimethyllysine. Positions 91-94 (DAPG) are G3. Residues 91-95 (DAPGH) and 153-156 (NKMD) contribute to the GTP site. A G4 region spans residues 153–156 (NKMD). Lys187 carries the N6,N6,N6-trimethyllysine modification. The interval 194–196 (SGF) is G5. An N6-methyllysine modification is found at Lys261. Glu289 carries the post-translational modification 5-glutamyl glycerylphosphorylethanolamine. An N6,N6,N6-trimethyllysine modification is found at Lys306. Glu362 is modified (5-glutamyl glycerylphosphorylethanolamine). Lys396 is subject to N6,N6,N6-trimethyllysine.

Belongs to the TRAFAC class translation factor GTPase superfamily. Classic translation factor GTPase family. EF-Tu/EF-1A subfamily.

The protein localises to the cytoplasm. Functionally, this protein promotes the GTP-dependent binding of aminoacyl-tRNA to the A-site of ribosomes during protein biosynthesis. The chain is Elongation factor 1-alpha from Hordeum vulgare (Barley).